A 603-amino-acid polypeptide reads, in one-letter code: MLSPERRPSMAERRPSFFSFTQNPSPLVVPHLAGIEDPLPATTPDKVDVLIAGTGMVESVLAAALAWQGSNVLHIDKNDYYGDTSATLTVDQIKRWVNEVNEGSVSCYKNAKLYVSTLIGSGKYSSRDFGIDLSPKILFAKSDLLSILIKSRVHQYLEFQSLSNFHTYENDCFEKLTNTKQEIFTDQNLPLMTKRNLMKFIKFVLNWEAQTEIWQPYAERTMSDFLGEKFKLEKPQVFELIFSIGLCYDLNVKVPEALQRIRRYLTSFDVYGPFPALCSKYGGPGELSQGFCRSAAVGGATYKLNEKLVSFNPTTKVATFQDGSKVEVSEKVIISPTQAPKDSKHVPQQQYQVHRLTCIVENPCTEWFNEGESAAMVVFPPGSLKSGNKEVVQAFILGAGSEICPEGTIVWYLSTTEQGPRAEMDIDAALEAMEMALLRESSSGLENDEEIVQLTGNGHTIVNSVKLGQSFKEYVPRERLQFLFKLYYTQYTSTPPFGVVNSSFFDVNQDLEKKYIPGASDNGVIYTTMPSAEISYDEVVTAAKVLYEKIVGSDDDFFDLDFEDEDEIQASGVANAEQFENAIDDDDDVNMEGSGEFVGEMEI.

Serine 470 is subject to Phosphoserine.

The protein belongs to the Rab GDI family.

Substrate-binding subunit (component A) of the Rab geranylgeranyltransferase (GGTase) complex. Binds unprenylated Rab proteins and presents the substrate peptide to the catalytic component B. The component A is thought to be regenerated by transferring its prenylated Rab back to the donor membrane. This is Rab proteins geranylgeranyltransferase component A (MRS6) from Saccharomyces cerevisiae (strain ATCC 204508 / S288c) (Baker's yeast).